Reading from the N-terminus, the 456-residue chain is Glycosyl hydrolase family 109 protein (456 aa).

Residues 1–31 (MKLNRRHFLKTAGLSAAGILTSQLPLSSAEA) constitute a signal peptide (tat-type signal). NAD(+) contacts are provided by residues 62 to 63 (QR), D84, 133 to 136 (WEWH), 153 to 154 (EV), and N182. Substrate-binding positions include Y211, R230, 242–245 (YPTH), and Y324. An NAD(+)-binding site is contributed by Y242.

It belongs to the Gfo/Idh/MocA family. Glycosyl hydrolase 109 subfamily. NAD(+) serves as cofactor. Post-translationally, predicted to be exported by the Tat system. The position of the signal peptide cleavage has not been experimentally proven.

Glycosidase. The sequence is that of Glycosyl hydrolase family 109 protein from Shewanella pealeana (strain ATCC 700345 / ANG-SQ1).